The sequence spans 98 residues: uncharacterized protein (98 aa).

This is an uncharacterized protein from Ureaplasma parvum serovar 3 (strain ATCC 700970).